The following is a 170-amino-acid chain: MALSTPKTLMDFFQPAKRLKASPSSSSSFPAVSVAGRSRDLGSVANSPPRVTVTTAVADDSSGLTPEQVARAEFHKFVAKSKSNLAVCSVKVTKAKGLILIMDLVKLWVYPSMCLKEKSPSSLLNIFKELHKDVGDKLHMVYFRRNKKENVSHVTSLAVEDVTGITRTKG.

The N-terminal 53 residues, 1–53 (MALSTPKTLMDFFQPAKRLKASPSSSSSFPAVSVAGRSRDLGSVANSPPRVTV), are a transit peptide targeting the mitochondrion.

It belongs to the uracil-DNA glycosylase (UDG) superfamily. UNG family.

It is found in the mitochondrion. Its function is as follows. Probable inactive paralog of AtUNG (AC Q9LIH6) generated by a gene duplication event and subsequently disrupted by at least two transposon insertions. This chain is Probable inactive uracil-DNA glycosylase, mitochondrial, found in Arabidopsis thaliana (Mouse-ear cress).